The primary structure comprises 484 residues: Protein nucleotidyltransferase YdiU (484 aa).

Glycine 81, glycine 83, arginine 84, lysine 103, aspartate 115, glycine 116, arginine 166, and arginine 173 together coordinate ATP. The Proton acceptor role is filled by aspartate 244. 2 residues coordinate Mg(2+): asparagine 245 and aspartate 254. Aspartate 254 is an ATP binding site.

The protein belongs to the SELO family. Mg(2+) serves as cofactor. It depends on Mn(2+) as a cofactor.

The catalysed reaction is L-seryl-[protein] + ATP = 3-O-(5'-adenylyl)-L-seryl-[protein] + diphosphate. The enzyme catalyses L-threonyl-[protein] + ATP = 3-O-(5'-adenylyl)-L-threonyl-[protein] + diphosphate. It catalyses the reaction L-tyrosyl-[protein] + ATP = O-(5'-adenylyl)-L-tyrosyl-[protein] + diphosphate. It carries out the reaction L-histidyl-[protein] + UTP = N(tele)-(5'-uridylyl)-L-histidyl-[protein] + diphosphate. The catalysed reaction is L-seryl-[protein] + UTP = O-(5'-uridylyl)-L-seryl-[protein] + diphosphate. The enzyme catalyses L-tyrosyl-[protein] + UTP = O-(5'-uridylyl)-L-tyrosyl-[protein] + diphosphate. In terms of biological role, nucleotidyltransferase involved in the post-translational modification of proteins. It can catalyze the addition of adenosine monophosphate (AMP) or uridine monophosphate (UMP) to a protein, resulting in modifications known as AMPylation and UMPylation. The chain is Protein nucleotidyltransferase YdiU from Shewanella sp. (strain MR-4).